The chain runs to 290 residues: Ribosomal protein L11 methyltransferase (290 aa).

4 residues coordinate S-adenosyl-L-methionine: threonine 135, glycine 158, aspartate 180, and asparagine 227.

It belongs to the methyltransferase superfamily. PrmA family.

It localises to the cytoplasm. The enzyme catalyses L-lysyl-[protein] + 3 S-adenosyl-L-methionine = N(6),N(6),N(6)-trimethyl-L-lysyl-[protein] + 3 S-adenosyl-L-homocysteine + 3 H(+). Functionally, methylates ribosomal protein L11. This is Ribosomal protein L11 methyltransferase from Mesorhizobium japonicum (strain LMG 29417 / CECT 9101 / MAFF 303099) (Mesorhizobium loti (strain MAFF 303099)).